A 417-amino-acid chain; its full sequence is Actin-related protein 10 (417 aa).

Belongs to the actin family. As to quaternary structure, subunit of dynactin, a multiprotein complex part of a tripartite complex with dynein and a adapter, such as BICDL1, BICD2 or HOOK3. The dynactin complex is built around ACTR1A/ACTB filament and consists of an actin-related filament composed of a shoulder domain, a pointed end and a barbed end. Its length is defined by its flexible shoulder domain. The soulder is composed of 2 DCTN1 subunits, 4 DCTN2 and 2 DCTN3. The 4 DCNT2 (via N-terminus) bind the ACTR1A filament and act as molecular rulers to determine the length. The pointed end is important for binding dynein-dynactin cargo adapters. Consists of 4 subunits: ACTR10, DCNT4, DCTN5 and DCTN6. The barbed end is composed of a CAPZA1:CAPZB heterodimers, which binds ACTR1A/ACTB filament and dynactin and stabilizes dynactin.

The protein localises to the cytoplasm. It localises to the cytoskeleton. Its function is as follows. Part of the dynactin complex that activates the molecular motor dynein for ultra-processive transport along microtubules. The protein is Actin-related protein 10 (ACTR10) of Homo sapiens (Human).